A 400-amino-acid chain; its full sequence is Enoyl-[acyl-carrier-protein] reductase [NADH] (400 aa).

NAD(+)-binding positions include 48-53 (GSSSGY), 74-75 (FE), 111-112 (DA), and 139-140 (LA). Tyrosine 225 is a binding site for substrate. Tyrosine 235 serves as the catalytic Proton donor. Residues lysine 244 and 273 to 275 (VVT) contribute to the NAD(+) site.

The protein belongs to the TER reductase family. As to quaternary structure, monomer.

It carries out the reaction a 2,3-saturated acyl-[ACP] + NAD(+) = a (2E)-enoyl-[ACP] + NADH + H(+). It functions in the pathway lipid metabolism; fatty acid biosynthesis. Involved in the final reduction of the elongation cycle of fatty acid synthesis (FAS II). Catalyzes the reduction of a carbon-carbon double bond in an enoyl moiety that is covalently linked to an acyl carrier protein (ACP). The sequence is that of Enoyl-[acyl-carrier-protein] reductase [NADH] from Shewanella denitrificans (strain OS217 / ATCC BAA-1090 / DSM 15013).